Here is a 185-residue protein sequence, read N- to C-terminus: MPLDAFSRAVVTADASTSVVSDINALKAFVASGNRRLDAVNAIASNASCAVSDAIAGIVCENQGLIQAGGNLYPNRRFAACLRDTEIILRYVTYALLAGDSSVLDDRALNGLKETYSALGVPTTSTIRAVQILKAIAVAHIQGTNTEARAGAKYRKNETPLVEDRCASIAAEAAGYFDRVIAALS.

(2R,3E)-phycoerythrobilin contacts are provided by cysteine 49 and cysteine 60. Asparagine 71 bears the N4-methylasparagine mark. Residues cysteine 81 and cysteine 166 each coordinate (2R,3E)-phycoerythrobilin.

It belongs to the phycobiliprotein family. Heterodimer of an alpha and a beta chain. In terms of processing, contains three covalently linked bilin chromophores.

It is found in the cellular thylakoid membrane. Its function is as follows. Light-harvesting photosynthetic bile pigment-protein from the phycobiliprotein complex. The chain is C-phycoerythrin beta chain (cpeB) from Pseudanabaena tenuis (strain PCC 7409).